The primary structure comprises 146 residues: Regulator of ribonuclease activity B (146 aa).

A disordered region spans residues 110–146 (WGTYFEDPDGEEEEGDEFDQDDEDGPADRDEVPATRH). Over residues 115–134 (EDPDGEEEEGDEFDQDDEDG) the composition is skewed to acidic residues. Residues 135-146 (PADRDEVPATRH) are compositionally biased toward basic and acidic residues.

It belongs to the RraB family. Interacts with the C-terminal region of Rne.

It is found in the cytoplasm. Functionally, globally modulates RNA abundance by binding to RNase E (Rne) and regulating its endonucleolytic activity. Can modulate Rne action in a substrate-dependent manner by altering the composition of the degradosome. The protein is Regulator of ribonuclease activity B of Sodalis glossinidius (strain morsitans).